Here is a 114-residue protein sequence, read N- to C-terminus: Nucleoid-associated protein slr1847 (114 aa).

The protein belongs to the YbaB/EbfC family. In terms of assembly, homodimer.

It is found in the cytoplasm. The protein localises to the nucleoid. Its function is as follows. Binds to DNA and alters its conformation. May be involved in regulation of gene expression, nucleoid organization and DNA protection. This Synechocystis sp. (strain ATCC 27184 / PCC 6803 / Kazusa) protein is Nucleoid-associated protein slr1847.